We begin with the raw amino-acid sequence, 416 residues long: cAMP-dependent protein kinase regulatory subunit (416 aa).

Residues 2–183 are dimerization and phosphorylation; it reads VSSLPKESQA…RLEKSIRNNF (182 aa). Phosphoserine is present on residues S3, S4, S9, S68, S70, S74, S77, S79, S81, S83, and S84. A dimerization/docking domain (D/D) region spans residues 8–45; it reads ESQAELQLFQNEINAANPSDFLQFSANYFNKRLEQQRA. Residues 65–138 are disordered; it reads PEESFSRPQS…TSTPPLPMHF (74 aa). Residues 70-84 show a composition bias toward low complexity; it reads SRPQSAQSQSRSRSS. T129 carries the post-translational modification Phosphothreonine. S130 carries the post-translational modification Phosphoserine. T131 and T144 each carry phosphothreonine. The Inhibitor sequence (IS) motif lies at 142–146; the sequence is RRTSV. The residue at position 145 (S145) is a Phosphoserine; by autocatalysis. At S147 the chain carries Phosphoserine. 2 positions are modified to phosphothreonine: T150 and T160. 3',5'-cyclic AMP-binding positions include 184–301, E249, R258, 302–416, E368, and R377; these read LFNK…KSMP and VLKS…PTRH.

The protein belongs to the cAMP-dependent kinase regulatory chain family. The inactive holoenzyme of cAMP-dependent protein kinase is a tetramer, composed of 2 regulatory subunits (R, encoded by BCY1) and two catalytic subunits (C, encoded by the 3 partially redundant TPK1, TPK2, and TPK3 genes). Activation by cAMP causes dissociation of the holoenzyme, producing 2 active catalytic monomers C and a regulatory dimer R(2). Post-translationally, phosphorylated by YAK1 in response to glucose starvation. Phosphorylated by MCK1 at Thr-129 upon TOR complex 1 (TORC1) inhibition. Thr-129 phosphorylation activates BCY1 to inhibit PKA. TORC1 inhibits phosphorylation of RxxS/T sites but has no effect on Ser-145 phosphorylation. The phosphorylation sites can be clustered in several groups, all localized in the N-terminal part. The first cluster termed cluster I (CI) is located close to the N-terminus and includes Ser-3, Ser-4 and Ser-9. The second includes Ser-68, Ser-70, Ser-74, Ser-77, Ser-79, Ser-81, Ser-83, and Ser-84. This cluster of phosphorylation sites, termed cluster II (CII), is important for BCY1 cytoplasmic localization and function. The third cluster of phosphorylated residues consists of Thr-144, Ser-145, Ser-147, Thr-150, and Thr-160. This cluster falls within or near the so-called autoinhibitory domain where the catalytic subunit of PKA autophosphorylates the highly conserved Ser-145 to inhibit BCY1. A last cluster of phosphorylated residues included Thr-129, Ser-130, and Thr-131 and is termed cluster III (CIII). Sites in CIII (and to a lesser extent in CII) are hyperphosphorylated in response to rapamycin.

Its subcellular location is the cytoplasm. It is found in the nucleus. Regulatory subunit of the cyclic AMP-dependent protein kinase (PKA), an effector of the Ras/cAMP pathway. Inhibits PKA activity in the absence of cAMP. cAMP activates PKA and promotes growth and proliferation in response to good nutrient conditions. Together with ZDS1, provides a negative feedback control on the cell wall integrity-signaling pathway by acting as a negative regulator of MAP kinase SLT2/MPK1. This is cAMP-dependent protein kinase regulatory subunit (BCY1) from Saccharomyces cerevisiae (strain ATCC 204508 / S288c) (Baker's yeast).